The sequence spans 158 residues: C-type lectin galactose-binding isoform (158 aa).

Residues 1-20 (MGRFLLVTLSLLVVAFSLNG) form the signal peptide. Intrachain disulfides connect C26-C37, C54-C154, and C129-C146. The C-type lectin domain maps to 33–155 (KNGYCYKVFK…CTALRPFLCQ (123 aa)). Positions 119, 121, 127, 142, and 143 each coordinate Ca(2+). Residues 119 to 121 (QPD) carry the Galactose-binding motif.

It belongs to the true venom lectin family. In terms of assembly, homodimer; disulfide-linked. Expressed by the venom gland.

The protein localises to the secreted. Its function is as follows. Galactose-binding lectin that binds to and agglutinates erythrocytes in a calcium-dependent manner. This is C-type lectin galactose-binding isoform from Hoplocephalus stephensii (Stephens's banded snake).